The sequence spans 89 residues: Small ribosomal subunit protein uS15 (89 aa).

It belongs to the universal ribosomal protein uS15 family. As to quaternary structure, part of the 30S ribosomal subunit. Forms a bridge to the 50S subunit in the 70S ribosome, contacting the 23S rRNA.

Functionally, one of the primary rRNA binding proteins, it binds directly to 16S rRNA where it helps nucleate assembly of the platform of the 30S subunit by binding and bridging several RNA helices of the 16S rRNA. In terms of biological role, forms an intersubunit bridge (bridge B4) with the 23S rRNA of the 50S subunit in the ribosome. The polypeptide is Small ribosomal subunit protein uS15 (Parafrankia sp. (strain EAN1pec)).